Here is a 114-residue protein sequence, read N- to C-terminus: uncharacterized protein (114 aa).

The helical transmembrane segment at 7–27 (YIFSFWFFFLVEYVVTFRLFL) threads the bilayer. Positions 90 to 114 (KNSPEKKKFKRGLPISSKYTDGKKR) are disordered.

It is found in the membrane. This is an uncharacterized protein from Saccharomyces cerevisiae (strain ATCC 204508 / S288c) (Baker's yeast).